Consider the following 78-residue polypeptide: Calcium/calmodulin-dependent protein kinase II inhibitor 1 (78 aa).

Residues 41-68 are CAMK2 inhibitory domain; sequence NKRPPKLGQIGRSKRVVIEDDRIDDVLK.

It belongs to the CAMK2N family. As to quaternary structure, interacts with CAMK2B; the presence of Ca(2+)/calmodulin increases the interaction but is not essential. Interacts with CAMK2A; this interaction requires CAMK2A activation by Ca(2+).

It is found in the synapse. It localises to the cell projection. The protein resides in the dendrite. The protein localises to the postsynaptic density. In terms of biological role, potent and specific inhibitor of CaM-kinase II (CAMK2). Plays a role in the maintenance of long-term retrieval-induced memory in response to contextual fear. Modulates blood pressure and vascular reactivity via regulation of CAMK2 activity in addition to regulation of left ventricular mass. Mediates the NLRP3 inflammasome in cardiomyocytes via acting as an inhibitor of the MAPK14/p38 and MAPK8/JNK pathways, thereby regulating ventricular remodeling and cardiac rhythm post-myocardial infarction. Negatively effects insulin sensitivity and promotes lipid formation in adipose tissues independent of CAMK2 signaling. The sequence is that of Calcium/calmodulin-dependent protein kinase II inhibitor 1 (CAMK2N1) from Homo sapiens (Human).